Reading from the N-terminus, the 1851-residue chain is Voltage-dependent calcium channel type A subunit alpha-1 (1851 aa).

At 1–38 the chain is on the cytoplasmic side; sequence MGGPKKEENPPGGGPTSLFILTEDNPIRKYTRFIIEWP. Residues 25-316 form an I repeat; the sequence is NPIRKYTRFI…LVLGVLSGEF (292 aa). A helical membrane pass occupies residues 39 to 57; it reads PFEYAVLLTIIANCVVLAL. The Extracellular portion of the chain corresponds to 58–75; that stretch reads EEHLPGGDKTVLAQKLEK. Residues 76–95 traverse the membrane as a helical segment; sequence TEAYFLCIFCVEASLKILAL. Residues 96 to 107 are Cytoplasmic-facing; that stretch reads GLVLHKHSYLRN. The helical transmembrane segment at 108–128 threads the bilayer; that stretch reads IWNIMDFFVVVTGFMTQYPQI. The Extracellular segment spans residues 129-133; sequence GPEVD. Residues 134 to 152 traverse the membrane as a helical segment; the sequence is LRTLRAIRVLRPLKLVSGI. Over 153-171 the chain is Cytoplasmic; that stretch reads PSLQVVLKSIIKAMAPLLQ. A helical transmembrane segment spans residues 172–191; sequence IGLLVLFAIVIFAIIGLEFY. Residues 192-288 lie on the Extracellular side of the membrane; the sequence is SGALHKTCYS…WTNDALGSAF (97 aa). Asn234 and Asn235 each carry an N-linked (GlcNAc...) asparagine glycan. Residues 289-313 form a helical membrane-spanning segment; it reads NWIYFVPLIVIGSFFMLNLVLGVLS. At 314-441 the chain is on the cytoplasmic side; sequence GEFSNERNRV…FWIRHTVKTQ (128 aa). Positions 381-417 are disordered; the sequence is RKKLKSLGKSKSTDTEEEEAEEDYGDDGYLKTRSKPQ. Over residues 395–406 the composition is skewed to acidic residues; the sequence is TEEEEAEEDYGD. The II repeat unit spans residues 427-670; the sequence is EKRFRFWIRH…VFLAIAVDNL (244 aa). Residues 442–460 form a helical membrane-spanning segment; that stretch reads WFYWFVIVLVFLNTVCVAV. Residues 461–475 are Extracellular-facing; the sequence is EHYGQPSFLTEFLYY. The chain crosses the membrane as a helical span at residues 476–495; that stretch reads AEFIFLGLFMSEMFIKMYAL. The Cytoplasmic portion of the chain corresponds to 496–503; sequence GPRIYFES. Residues 504 to 522 form a helical membrane-spanning segment; the sequence is SFNRFDCVVISGSIFEVIW. Residues 523–531 lie on the Extracellular side of the membrane; it reads SEVKGGSFG. Residues 532–550 form a helical membrane-spanning segment; the sequence is LSVLRALRLLRIFKVTKYW. Over 551–569 the chain is Cytoplasmic; it reads SSLRNLVISLLNSMRSIIS. A helical membrane pass occupies residues 570-589; the sequence is LLFLLFLFILIFALLGMQLF. Topologically, residues 590–642 are extracellular; sequence GGQFNLPGGTPETNFNTFPIALLTVFQILTGEDWNEVMYQGIISQGGAQKGMI. Residues 643 to 667 form a helical membrane-spanning segment; sequence YSIYFIVLVLFGNYTLLNVFLAIAV. The Cytoplasmic segment spans residues 668–767; sequence DNLANAQELT…IRRGAHWVVN (100 aa). The interval 710–741 is disordered; sequence ENGDGAVAPSKSKGKKKEEEKKEEEEVTEGPK. The stretch at 762–1049 is one III repeat; that stretch reads AHWVVNLPYF…IITFQEQGEA (288 aa). A helical transmembrane segment spans residues 768-786; that stretch reads LPYFDFFIMVVISMSSIAL. Residues 787 to 802 are Extracellular-facing; the sequence is AAEDPVRENSRRNKIL. A helical membrane pass occupies residues 803–822; the sequence is NYFDYAFTGVFTIEMLLKIV. Over 823–834 the chain is Cytoplasmic; sequence DLGVILHPGSYL. A helical membrane pass occupies residues 835–853; that stretch reads REFWNIMDAVVVICAAVSF. The Extracellular segment spans residues 854–866; the sequence is GFDMSGSSAGQNL. N-linked (GlcNAc...) asparagine glycosylation is present at Asn865. Residues 867–885 form a helical membrane-spanning segment; the sequence is STIKSLRVLRVLRPLKTIK. Residues 886-904 lie on the Cytoplasmic side of the membrane; sequence RVPKLKAVFDCVVNSLKNV. Residues 905-924 traverse the membrane as a helical segment; the sequence is VNILIVYILFQFIFSVIGVQ. Residues 925 to 1013 are Extracellular-facing; sequence LFNGKFFYCT…EDRGPIQNFR (89 aa). Residues 1014–1038 traverse the membrane as a helical segment; sequence IEMSIFYIVYFIVFPFFFVNIFVAL. The Cytoplasmic segment spans residues 1039–1093; that stretch reads IIITFQEQGEAELQDGEIDKNQKSCIDFTIGARPLERYMPKNRNTFKYKVWRIVV. The IV repeat unit spans residues 1086–1347; that stretch reads YKVWRIVVST…DNFDYLTRDS (262 aa). A helical membrane pass occupies residues 1094–1122; it reads STPFEYFIMMLIVFNTLLLMMKYHNQGDM. Residues 1123-1127 lie on the Extracellular side of the membrane; the sequence is YEKSL. Residues 1128-1147 form a helical membrane-spanning segment; sequence KYINMGFTGMFSVETVLKII. Residues 1148–1155 are Cytoplasmic-facing; sequence GFGVKNFF. The chain crosses the membrane as a helical span at residues 1156 to 1174; sequence KDPWNIFDLITVLGSIVDA. Residues 1175–1184 lie on the Extracellular side of the membrane; the sequence is LWMEFGHDDS. A helical transmembrane segment spans residues 1185-1203; it reads NSINVGFLRLFRAARLIKL. Residues 1204–1222 are Cytoplasmic-facing; the sequence is LRQGYTIRILLWTFVQSFK. Residues 1223 to 1242 traverse the membrane as a helical segment; that stretch reads ALPYVCLLIAMLFFIYAIIG. The Extracellular segment spans residues 1243–1308; that stretch reads MQVFGNIKLG…DAEKAPGEYC (66 aa). A phenylalkylamine binding region spans residues 1306–1348; sequence EYCGSTLAYAYFVSFIFFCSFLMLNLFVAVIMDNFDYLTRDSS. The chain crosses the membrane as a helical span at residues 1309 to 1333; that stretch reads GSTLAYAYFVSFIFFCSFLMLNLFV. At 1334–1851 the chain is on the cytoplasmic side; sequence AVIMDNFDYL…HSDSDEEDWC (518 aa). The region spanning 1353 to 1388 is the EF-hand domain; that stretch reads HHLDEFVRIWAEYDPNATGKIHYTEMYDMLKNMDPP. Residues Asp1366, Asn1368, Thr1370, Lys1372, and Glu1377 each coordinate Ca(2+). Disordered stretches follow at residues 1513 to 1572, 1588 to 1653, 1685 to 1764, and 1823 to 1851; these read DASR…HHDI, TRHP…SPAR, RAGI…DRDR, and VLPSPVLNGFKPKSGLNPRHSDSDEEDWC. Residues 1589–1600 show a composition bias toward basic residues; it reads RHPRHGNSHPRY. Residues 1604 to 1619 are compositionally biased toward low complexity; sequence SWSASTSPARSPSPSR. Polar residues-rich tracts occupy residues 1637–1649 and 1698–1710; these read YGTTSLCQRSRSP and KPSTLQLKPTNIN. Positions 1734–1764 are enriched in basic and acidic residues; sequence HHRDLLRDPRDMYYSSRERERDRERLRDRDR.

It belongs to the calcium channel alpha-1 subunit (TC 1.A.1.11) family. As to expression, expressed widely in the embryonic nervous system.

The protein localises to the membrane. In terms of biological role, voltage-sensitive calcium channels (VSCC) mediate the entry of calcium ions into excitable cells and are also involved in a variety of calcium-dependent processes, including muscle contraction, neurotransmitter release, gene expression, cell motility, cell division and cell death. Probably encodes a dihydropyridine-insensitive current. Vital for survival to adulthood. This is Voltage-dependent calcium channel type A subunit alpha-1 (cac) from Drosophila melanogaster (Fruit fly).